The sequence spans 562 residues: Phosphoacetylglucosamine mutase (562 aa).

The active-site Phosphoserine intermediate is serine 74. 4 residues coordinate Mg(2+): serine 74, aspartate 291, aspartate 293, and aspartate 295. Residues 395 to 397 (EAN), 526 to 530 (RPSGT), and arginine 535 each bind substrate.

Belongs to the phosphohexose mutase family. Mg(2+) is required as a cofactor.

It carries out the reaction N-acetyl-alpha-D-glucosamine 1-phosphate = N-acetyl-D-glucosamine 6-phosphate. It participates in nucleotide-sugar biosynthesis; UDP-N-acetyl-alpha-D-glucosamine biosynthesis; N-acetyl-alpha-D-glucosamine 1-phosphate from alpha-D-glucosamine 6-phosphate (route I): step 2/2. Interconverts GlcNAc-6-P and GlcNAc-1-P. The polypeptide is Phosphoacetylglucosamine mutase (Oryza sativa subsp. japonica (Rice)).